Consider the following 204-residue polypeptide: Thymidylate kinase (204 aa).

An ATP-binding site is contributed by 7 to 14; sequence GGEGVGKT.

This sequence belongs to the thymidylate kinase family.

It carries out the reaction dTMP + ATP = dTDP + ADP. In terms of biological role, phosphorylation of dTMP to form dTDP in both de novo and salvage pathways of dTTP synthesis. The sequence is that of Thymidylate kinase from Synechococcus sp. (strain JA-3-3Ab) (Cyanobacteria bacterium Yellowstone A-Prime).